Here is a 186-residue protein sequence, read N- to C-terminus: Tumor necrosis factor, alpha-induced protein 8-like protein 2 B (186 aa).

Belongs to the TNFAIP8 family. TNFAIP8L2 subfamily.

Its function is as follows. Acts as a negative regulator of innate and adaptive immunity by maintaining immune homeostasis. Negative regulator of Toll-like receptor and T-cell receptor function. Prevents hyperresponsiveness of the immune system and maintains immune homeostasis. Inhibits jun/ap1 and NF-kappa-B activation. Promotes Fas-induced apoptosis. In Danio rerio (Zebrafish), this protein is Tumor necrosis factor, alpha-induced protein 8-like protein 2 B (tnfaip8l2b).